Consider the following 245-residue polypeptide: Cuticle protein (245 aa).

The 62-residue stretch at V25 to S86 folds into the Chitin-binding type R&amp;R domain. Residues D79–D100 are disordered. 3 tandem repeats follow at residues V92 to S95, V108 to T111, and F118 to V121.

Component of the cuticle of African malaria mosquito. This chain is Cuticle protein (Ccp84Ab), found in Anopheles gambiae (African malaria mosquito).